We begin with the raw amino-acid sequence, 130 residues long: Small ribosomal subunit protein eS6 (130 aa).

It belongs to the eukaryotic ribosomal protein eS6 family.

In Methanosphaera stadtmanae (strain ATCC 43021 / DSM 3091 / JCM 11832 / MCB-3), this protein is Small ribosomal subunit protein eS6.